The primary structure comprises 153 residues: Cystatin-9 (153 aa).

Residues 1–27 form the signal peptide; it reads MGRQRRCRWAQPWTLLLLLLGPRLLVT.

This sequence belongs to the cystatin family.

It localises to the secreted. Functionally, may play a role in hematopoietic differentiation or inflammation. In Bos taurus (Bovine), this protein is Cystatin-9 (CST9).